The chain runs to 177 residues: von Ebner gland protein 1 (177 aa).

A signal peptide spans 1 to 18 (MKALLLTFGLSLLAALQA). A disulfide bridge links cysteine 80 with cysteine 172.

It belongs to the calycin superfamily. Lipocalin family. In terms of assembly, homodimer.

It localises to the secreted. Functionally, could play a role in taste reception. Could be necessary for the concentration and delivery of sapid molecules in the gustatory system. This is von Ebner gland protein 1 (Vegp1) from Rattus norvegicus (Rat).